The primary structure comprises 340 residues: MTVSPTTQPQTNHSLPPADAKQRVSQFMQTLQDEICQGLEALDGKGKFQEDSWQREEGGGGRSRVLADGDFLEQGGVNFSEVWGKSLPPSILKQRPEAEGHEFYATGTSMVLHPKNPYIPTVHLNYRYFEAGPVWWFGGGADLTPYYPFAEDAAHFHHTLKNACDQTHGEFYPVFKRWCDEYFYLKHRQEMRGIGGIFFDYQDGNAPLYRGPDPNGPAAQYSNQLAPIEPLGWEDLFSFAQRCGRAFLPAYSPIVEKRRNTEYGDRQRQFQLYRRGRYVEFNLVYDRGTIFGLQTNGRTESILMSLPPLVRWQYCYSPEAGSPEAELTEKFLVPQDWVNS.

The segment covering 1 to 14 has biased composition (polar residues); the sequence is MTVSPTTQPQTNHS. A disordered region spans residues 1 to 22; sequence MTVSPTTQPQTNHSLPPADAKQ. Substrate is bound at residue serine 109. Positions 113 and 123 each coordinate a divalent metal cation. The active-site Proton donor is histidine 123. 125–127 contributes to the substrate binding site; the sequence is NYR. The a divalent metal cation site is built by histidine 157 and histidine 187. The segment at 278–313 is important for dimerization; sequence YVEFNLVYDRGTIFGLQTNGRTESILMSLPPLVRWQ. 296–298 provides a ligand contact to substrate; the sequence is NGR.

It belongs to the aerobic coproporphyrinogen-III oxidase family. In terms of assembly, homodimer. Requires a divalent metal cation as cofactor.

Its subcellular location is the cytoplasm. It carries out the reaction coproporphyrinogen III + O2 + 2 H(+) = protoporphyrinogen IX + 2 CO2 + 2 H2O. It participates in porphyrin-containing compound metabolism; protoporphyrin-IX biosynthesis; protoporphyrinogen-IX from coproporphyrinogen-III (O2 route): step 1/1. Its function is as follows. Involved in the heme and chlorophyll biosynthesis. Catalyzes the aerobic oxidative decarboxylation of propionate groups of rings A and B of coproporphyrinogen-III to yield the vinyl groups in protoporphyrinogen-IX. In Synechocystis sp. (strain ATCC 27184 / PCC 6803 / Kazusa), this protein is Oxygen-dependent coproporphyrinogen-III oxidase.